A 337-amino-acid chain; its full sequence is tRNA N6-adenosine threonylcarbamoyltransferase (337 aa).

The Fe cation site is built by His111 and His115. Substrate-binding positions include Leu134–Gly138, Asp167, Gly180, and Asn272. Position 300 (Asp300) interacts with Fe cation.

Belongs to the KAE1 / TsaD family. The cofactor is Fe(2+).

Its subcellular location is the cytoplasm. It catalyses the reaction L-threonylcarbamoyladenylate + adenosine(37) in tRNA = N(6)-L-threonylcarbamoyladenosine(37) in tRNA + AMP + H(+). Functionally, required for the formation of a threonylcarbamoyl group on adenosine at position 37 (t(6)A37) in tRNAs that read codons beginning with adenine. Is involved in the transfer of the threonylcarbamoyl moiety of threonylcarbamoyl-AMP (TC-AMP) to the N6 group of A37, together with TsaE and TsaB. TsaD likely plays a direct catalytic role in this reaction. The protein is tRNA N6-adenosine threonylcarbamoyltransferase of Aeromonas hydrophila subsp. hydrophila (strain ATCC 7966 / DSM 30187 / BCRC 13018 / CCUG 14551 / JCM 1027 / KCTC 2358 / NCIMB 9240 / NCTC 8049).